A 210-amino-acid polypeptide reads, in one-letter code: ATP-dependent dethiobiotin synthetase BioD (210 aa).

Asn-12–His-17 lines the ATP pocket. Residue Thr-16 coordinates Mg(2+). Residue Lys-37 is part of the active site. Thr-41 is a binding site for substrate. Position 114 (Glu-114) interacts with Mg(2+). Glu-114–Gly-117 contacts ATP.

The protein belongs to the dethiobiotin synthetase family. As to quaternary structure, homodimer. The cofactor is Mg(2+).

The protein resides in the cytoplasm. It carries out the reaction (7R,8S)-7,8-diammoniononanoate + CO2 + ATP = (4R,5S)-dethiobiotin + ADP + phosphate + 3 H(+). It participates in cofactor biosynthesis; biotin biosynthesis; biotin from 7,8-diaminononanoate: step 1/2. Catalyzes a mechanistically unusual reaction, the ATP-dependent insertion of CO2 between the N7 and N8 nitrogen atoms of 7,8-diaminopelargonic acid (DAPA, also called 7,8-diammoniononanoate) to form a ureido ring. The polypeptide is ATP-dependent dethiobiotin synthetase BioD (Sulfurovum sp. (strain NBC37-1)).